The chain runs to 177 residues: Outer membrane lipoprotein Blc (177 aa).

The first 18 residues, 1–18 (MRILPVVAAVTAAFLVVA), serve as a signal peptide directing secretion. C19 carries the N-palmitoyl cysteine lipid modification. C19 is lipidated: S-diacylglycerol cysteine.

It belongs to the calycin superfamily. Lipocalin family. In terms of assembly, homodimer.

It localises to the cell outer membrane. In terms of biological role, involved in the storage or transport of lipids necessary for membrane maintenance under stressful conditions. Displays a binding preference for lysophospholipids. The protein is Outer membrane lipoprotein Blc of Citrobacter freundii.